A 276-amino-acid polypeptide reads, in one-letter code: NADPH-dependent 7-cyano-7-deazaguanine reductase (276 aa).

83-85 (IES) is a binding site for substrate. Residue 85–86 (SK) coordinates NADPH. The active-site Thioimide intermediate is Cys184. Asp191 serves as the catalytic Proton donor. Position 223-224 (223-224 (HE)) interacts with substrate. Position 252–253 (252–253 (RG)) interacts with NADPH.

This sequence belongs to the GTP cyclohydrolase I family. QueF type 2 subfamily. Homodimer.

It localises to the cytoplasm. It carries out the reaction 7-aminomethyl-7-carbaguanine + 2 NADP(+) = 7-cyano-7-deazaguanine + 2 NADPH + 3 H(+). The protein operates within tRNA modification; tRNA-queuosine biosynthesis. Its function is as follows. Catalyzes the NADPH-dependent reduction of 7-cyano-7-deazaguanine (preQ0) to 7-aminomethyl-7-deazaguanine (preQ1). This Pseudomonas fluorescens (strain SBW25) protein is NADPH-dependent 7-cyano-7-deazaguanine reductase.